Consider the following 93-residue polypeptide: Integration host factor subunit beta (93 aa).

This sequence belongs to the bacterial histone-like protein family. Heterodimer of an alpha and a beta chain.

Functionally, this protein is one of the two subunits of integration host factor, a specific DNA-binding protein that functions in genetic recombination as well as in transcriptional and translational control. The chain is Integration host factor subunit beta from Glaesserella parasuis serovar 5 (strain SH0165) (Haemophilus parasuis).